Consider the following 48-residue polypeptide: Large ribosomal subunit protein eL40 (48 aa).

It belongs to the eukaryotic ribosomal protein eL40 family.

The sequence is that of Large ribosomal subunit protein eL40 from Methanocella arvoryzae (strain DSM 22066 / NBRC 105507 / MRE50).